The sequence spans 155 residues: Small ribosomal subunit protein uS7c (155 aa).

It belongs to the universal ribosomal protein uS7 family. As to quaternary structure, part of the 30S ribosomal subunit.

It localises to the plastid. The protein resides in the chloroplast. Its function is as follows. One of the primary rRNA binding proteins, it binds directly to 16S rRNA where it nucleates assembly of the head domain of the 30S subunit. The polypeptide is Small ribosomal subunit protein uS7c (rps7) (Yucca glauca (Soapweed yucca)).